The following is a 388-amino-acid chain: Glucose-6-phosphate/phosphate translocator 2, chloroplastic (388 aa).

The transit peptide at 1 to 68 directs the protein to the chloroplast; sequence MLSSIKPSSS…SASNFKREVK (68 aa). 8 helical membrane-spanning segments follow: residues 95-115, 122-142, 158-178, 211-231, 233-253, 281-301, 305-325, and 358-378; these read LKIG…NIYN, FPYP…MMLV, FWKT…AATV, FPLP…LAAI, ELNF…AFVF, LVIL…AAGW, VSQV…FYHL, and IIIF…IAIF. Residues 113 to 231 enclose the EamA domain; the sequence is IYNKKVLNAF…IIGGCALAAI (119 aa).

It belongs to the TPT transporter family. GPT (TC 2.A.7.9) subfamily. Expressed in seeds, flowers, stamens, and rosette leaves, with highest levels found in sepals and senescing leaves.

It is found in the plastid. It localises to the chloroplast membrane. In terms of biological role, glucose 6-phosphate (Glc6P) transporter. Also transports inorganic phosphate, 3-phosphoglycerate, triose phosphates and, to a leser extent, phosphoenolpyruvate. Responsible for the transport of Glc6P into plastids of heterotrophic tissues where it can be used as a carbon source for starch biosynthesis, as substrate for fatty acid biosynthesis or as substrate for NADPH generation via the oxidative pentose phosphate pathway (OPPP). Required for dynamic acclimation of photosynthesis and partitioning of Glc6P between the chloroplast and the cytosol. May modulate the sensing of sugar status during early seedling development. This is Glucose-6-phosphate/phosphate translocator 2, chloroplastic from Arabidopsis thaliana (Mouse-ear cress).